The following is a 54-amino-acid chain: SCINHGDACDGYKDDCQCCRRNGFCSCSGIFGYKWNCICDVGTTATSYGICMAK.

Disulfide bonds link C2–C19, C9–C25, C16–C51, C18–C39, and C27–C37.

Expressed by the venom gland.

The protein resides in the secreted. Functionally, omega-agatoxins are antagonists of voltage-gated calcium channels (Cav). Causes rapid general flaccid paralysis followed by death in 10-30 minutes when injected in mice at dose levels of 5 ug per mouse. This Phoneutria reidyi (Brazilian Amazonian armed spider) protein is U1-ctenitoxin-Pr1a.